The following is a 177-amino-acid chain: Protein BROTHER of FT and TFL 1 (177 aa).

It belongs to the phosphatidylethanolamine-binding protein family.

It localises to the cytoplasm. Its function is as follows. May form complexes with phosphorylated ligands by interfering with kinases and their effectors. This is Protein BROTHER of FT and TFL 1 (BFT) from Arabidopsis thaliana (Mouse-ear cress).